The primary structure comprises 607 residues: Bifunctional endo-1,4-beta-xylanase A (607 aa).

The first 18 residues, 1 to 18, serve as a signal peptide directing secretion; that stretch reads MRTIKFFFAVAIATVAKA. Residues 35–242 enclose the GH11 1 domain; sequence NGQTQHKGVA…SSGIADVTKL (208 aa). The active-site Nucleophile is the E141. Catalysis depends on E223, which acts as the Proton donor. Positions 248-272 are enriched in polar residues; that stretch reads QKGSNPAPTSTGTVPSSSAGGSTAN. A disordered region spans residues 248–284; it reads QKGSNPAPTSTGTVPSSSAGGSTANGKKFTVGNGQNQ. In terms of domain architecture, GH11 2 spans 280 to 487; that stretch reads NGQNQHKGVN…SSGVADVTLL (208 aa). E386 (nucleophile) is an active-site residue. E474 (proton donor) is an active-site residue. Residues 493–514 form a disordered region; it reads PKGSSPATSAAPRTTTRTTTRT. The span at 496-514 shows a compositional bias: low complexity; the sequence is SSPATSAAPRTTTRTTTRT. CBM10 domains follow at residues 523–563 and 566–606; these read KCSA…CGCG and QCSS…CGCG.

It belongs to the glycosyl hydrolase 11 (cellulase G) family.

The catalysed reaction is Endohydrolysis of (1-&gt;4)-beta-D-xylosidic linkages in xylans.. Its pathway is glycan degradation; xylan degradation. In terms of biological role, hydrolyzes xylans into xylobiose and xylose. In Neocallimastix patriciarum (Rumen fungus), this protein is Bifunctional endo-1,4-beta-xylanase A (XYNA).